The following is a 370-amino-acid chain: Histidinol-phosphate aminotransferase 1 (370 aa).

Lys222 is subject to N6-(pyridoxal phosphate)lysine.

Belongs to the class-II pyridoxal-phosphate-dependent aminotransferase family. Histidinol-phosphate aminotransferase subfamily. Homodimer. The cofactor is pyridoxal 5'-phosphate.

The enzyme catalyses L-histidinol phosphate + 2-oxoglutarate = 3-(imidazol-4-yl)-2-oxopropyl phosphate + L-glutamate. It functions in the pathway amino-acid biosynthesis; L-histidine biosynthesis; L-histidine from 5-phospho-alpha-D-ribose 1-diphosphate: step 7/9. This chain is Histidinol-phosphate aminotransferase 1, found in Bacillus thuringiensis subsp. konkukian (strain 97-27).